The chain runs to 91 residues: Small ribosomal subunit protein uS17 (91 aa).

Belongs to the universal ribosomal protein uS17 family. In terms of assembly, part of the 30S ribosomal subunit.

Its function is as follows. One of the primary rRNA binding proteins, it binds specifically to the 5'-end of 16S ribosomal RNA. The chain is Small ribosomal subunit protein uS17 from Saccharopolyspora erythraea (strain ATCC 11635 / DSM 40517 / JCM 4748 / NBRC 13426 / NCIMB 8594 / NRRL 2338).